A 203-amino-acid polypeptide reads, in one-letter code: FMN-dependent NADH:quinone oxidoreductase (203 aa).

FMN contacts are provided by residues Ser9, 15 to 17 (SVS), and 138 to 141 (SRGG).

This sequence belongs to the azoreductase type 1 family. In terms of assembly, homodimer. FMN is required as a cofactor.

It carries out the reaction 2 a quinone + NADH + H(+) = 2 a 1,4-benzosemiquinone + NAD(+). The catalysed reaction is N,N-dimethyl-1,4-phenylenediamine + anthranilate + 2 NAD(+) = 2-(4-dimethylaminophenyl)diazenylbenzoate + 2 NADH + 2 H(+). Functionally, quinone reductase that provides resistance to thiol-specific stress caused by electrophilic quinones. Its function is as follows. Also exhibits azoreductase activity. Catalyzes the reductive cleavage of the azo bond in aromatic azo compounds to the corresponding amines. In Methylorubrum extorquens (strain CM4 / NCIMB 13688) (Methylobacterium extorquens), this protein is FMN-dependent NADH:quinone oxidoreductase.